The primary structure comprises 115 residues: Replication initiation control protein YabA (115 aa).

Zn(2+) is bound by residues H86, C88, C102, and C105.

Belongs to the YabA family. Homotetramer. Interacts with both DnaA and DnaN, acting as a bridge between these two proteins. Zn(2+) is required as a cofactor.

It is found in the cytoplasm. The protein resides in the nucleoid. In terms of biological role, involved in control of chromosome replication initiation. Inhibits the cooperative binding of DnaA to the oriC region, thus negatively regulating initiation of chromosome replication. Inhibits the ability of DnaA-ATP to form a helix on DNA; does not disassemble preformed DnaA-DNA helices. Decreases the residence time of DnaA on the chromosome at its binding sites (oriC, replication forks and promoter-binding sites). Tethers DnaA to the replication machinery via the DNA polymerase beta sliding clamp subunit (dnaN). Associates with oriC and other DnaA targets on the chromosome in a DnaA-dependent manner. The polypeptide is Replication initiation control protein YabA (Enterococcus faecalis (strain ATCC 700802 / V583)).